The primary structure comprises 232 residues: Lipoprotein-releasing system ATP-binding protein LolD (232 aa).

In terms of domain architecture, ABC transporter spans 11–231; that stretch reads VYLHDIKRQY…SIEDGVIVEL (221 aa). 47-54 is an ATP binding site; sequence APSGSGKS.

This sequence belongs to the ABC transporter superfamily. Lipoprotein translocase (TC 3.A.1.125) family. In terms of assembly, the complex is composed of two ATP-binding proteins (LolD) and two transmembrane proteins (LolC and LolE).

Its subcellular location is the cell inner membrane. In terms of biological role, part of the ABC transporter complex LolCDE involved in the translocation of mature outer membrane-directed lipoproteins, from the inner membrane to the periplasmic chaperone, LolA. Responsible for the formation of the LolA-lipoprotein complex in an ATP-dependent manner. In Rhodopseudomonas palustris (strain BisB5), this protein is Lipoprotein-releasing system ATP-binding protein LolD.